Consider the following 295-residue polypeptide: Glycine--tRNA ligase alpha subunit (295 aa).

This sequence belongs to the class-II aminoacyl-tRNA synthetase family. In terms of assembly, tetramer of two alpha and two beta subunits.

It localises to the cytoplasm. The enzyme catalyses tRNA(Gly) + glycine + ATP = glycyl-tRNA(Gly) + AMP + diphosphate. In Bacillus subtilis (strain 168), this protein is Glycine--tRNA ligase alpha subunit (glyQ).